The sequence spans 200 residues: Holliday junction branch migration complex subunit RuvA (200 aa).

The segment at 1-63 (MIALLTGQIA…EDAILLYGFR (63 aa)) is domain I. Residues 64 to 142 (TRTEKSFFQL…KLDSGSIPAG (79 aa)) are domain II. Residues 143-153 (DAVGRSLPAGS) form a flexible linker region. The segment at 153 to 200 (SVLDDVSSALVNLGYKDPQVRKVLAELDCAGSASVEEVLKQALKILMK) is domain III.

This sequence belongs to the RuvA family. Homotetramer. Forms an RuvA(8)-RuvB(12)-Holliday junction (HJ) complex. HJ DNA is sandwiched between 2 RuvA tetramers; dsDNA enters through RuvA and exits via RuvB. An RuvB hexamer assembles on each DNA strand where it exits the tetramer. Each RuvB hexamer is contacted by two RuvA subunits (via domain III) on 2 adjacent RuvB subunits; this complex drives branch migration. In the full resolvosome a probable DNA-RuvA(4)-RuvB(12)-RuvC(2) complex forms which resolves the HJ.

The protein localises to the cytoplasm. In terms of biological role, the RuvA-RuvB-RuvC complex processes Holliday junction (HJ) DNA during genetic recombination and DNA repair, while the RuvA-RuvB complex plays an important role in the rescue of blocked DNA replication forks via replication fork reversal (RFR). RuvA specifically binds to HJ cruciform DNA, conferring on it an open structure. The RuvB hexamer acts as an ATP-dependent pump, pulling dsDNA into and through the RuvAB complex. HJ branch migration allows RuvC to scan DNA until it finds its consensus sequence, where it cleaves and resolves the cruciform DNA. In Trichlorobacter lovleyi (strain ATCC BAA-1151 / DSM 17278 / SZ) (Geobacter lovleyi), this protein is Holliday junction branch migration complex subunit RuvA.